A 183-amino-acid chain; its full sequence is Ribosome maturation factor RimM (183 aa).

The 77-residue stretch at 95–171 (DPDEFYDHEL…VVVIDPPEGL (77 aa)) folds into the PRC barrel domain.

It belongs to the RimM family. In terms of assembly, binds ribosomal protein uS19.

The protein resides in the cytoplasm. In terms of biological role, an accessory protein needed during the final step in the assembly of 30S ribosomal subunit, possibly for assembly of the head region. Essential for efficient processing of 16S rRNA. May be needed both before and after RbfA during the maturation of 16S rRNA. It has affinity for free ribosomal 30S subunits but not for 70S ribosomes. This Rhodococcus opacus (strain B4) protein is Ribosome maturation factor RimM.